The primary structure comprises 132 residues: Small ribosomal subunit protein uS8 (132 aa).

The protein belongs to the universal ribosomal protein uS8 family. Part of the 30S ribosomal subunit. Contacts proteins S5 and S12.

Functionally, one of the primary rRNA binding proteins, it binds directly to 16S rRNA central domain where it helps coordinate assembly of the platform of the 30S subunit. The sequence is that of Small ribosomal subunit protein uS8 from Bifidobacterium animalis subsp. lactis (strain AD011).